A 457-amino-acid polypeptide reads, in one-letter code: Serine/threonine-protein phosphatase 2A regulatory subunit B'' subunit gamma (457 aa).

EF-hand domains are found at residues P276 to S311 and K344 to Q379. Residues D289, D291, N293, M295, and E300 each coordinate Ca(2+).

It localises to the nucleus. Its subcellular location is the cytoplasm. Possible role in the regulation of cell death. This is Serine/threonine-protein phosphatase 2A regulatory subunit B'' subunit gamma (ppp2r3c) from Danio rerio (Zebrafish).